A 207-amino-acid chain; its full sequence is Probable molybdenum cofactor guanylyltransferase (207 aa).

GTP-binding positions include 9 to 11 (LAG), Lys21, and Asp97. Residue Asp97 participates in Mg(2+) binding.

The protein belongs to the MobA family. Requires Mg(2+) as cofactor.

The protein localises to the cytoplasm. The catalysed reaction is Mo-molybdopterin + GTP + H(+) = Mo-molybdopterin guanine dinucleotide + diphosphate. Functionally, transfers a GMP moiety from GTP to Mo-molybdopterin (Mo-MPT) cofactor (Moco or molybdenum cofactor) to form Mo-molybdopterin guanine dinucleotide (Mo-MGD) cofactor. The polypeptide is Probable molybdenum cofactor guanylyltransferase (Nostoc sp. (strain PCC 7120 / SAG 25.82 / UTEX 2576)).